The primary structure comprises 374 residues: Beta-lytic metalloendopeptidase (374 aa).

A signal peptide spans 1 to 24; that stretch reads MKKISKAGLGLALVCALATIGGNA. A propeptide spanning residues 25-195 is cleaved from the precursor; the sequence is ARRATAQRRG…RQGRPGRAAV (171 aa). The segment at 128–187 is disordered; that stretch reads PTRQGAGDAGPRQSAAGAVRAFRRQRAGGRAARRRRVPAGLRPPVQRTAPGQGGFGPLRQ. The span at 148 to 164 shows a compositional bias: basic residues; sequence AFRRQRAGGRAARRRRV. Residues Cys-261 and Cys-307 are joined by a disulfide bond. His-316 and His-318 together coordinate Zn(2+). An intrachain disulfide couples Cys-351 to Cys-364.

This sequence belongs to the peptidase M23A family. Zn(2+) serves as cofactor.

The protein localises to the secreted. It carries out the reaction Cleavage of N-acetylmuramoyl-|-Ala, and of the insulin B chain at 23-Gly-|-Phe-24 &gt; 18-Val-|-Cys(SO3H).. In Achromobacter lyticus, this protein is Beta-lytic metalloendopeptidase.